We begin with the raw amino-acid sequence, 208 residues long: Adenylyl-sulfate kinase (208 aa).

An ATP-binding site is contributed by Gly-31–Ser-38. The Phosphoserine intermediate role is filled by Ser-105.

The protein belongs to the APS kinase family.

It carries out the reaction adenosine 5'-phosphosulfate + ATP = 3'-phosphoadenylyl sulfate + ADP + H(+). Its pathway is sulfur metabolism; hydrogen sulfide biosynthesis; sulfite from sulfate: step 2/3. Its function is as follows. Catalyzes the synthesis of activated sulfate. The chain is Adenylyl-sulfate kinase from Pseudomonas entomophila (strain L48).